The following is a 284-amino-acid chain: tRNA uridine(34) hydroxylase (284 aa).

One can recognise a Rhodanese domain in the interval T132–Y226. C186 acts as the Cysteine persulfide intermediate in catalysis.

The protein belongs to the TrhO family.

The enzyme catalyses uridine(34) in tRNA + AH2 + O2 = 5-hydroxyuridine(34) in tRNA + A + H2O. Its function is as follows. Catalyzes oxygen-dependent 5-hydroxyuridine (ho5U) modification at position 34 in tRNAs. The polypeptide is tRNA uridine(34) hydroxylase (Burkholderia lata (strain ATCC 17760 / DSM 23089 / LMG 22485 / NCIMB 9086 / R18194 / 383)).